A 503-amino-acid polypeptide reads, in one-letter code: Diels-Alderase cghA (503 aa).

This sequence belongs to the Diels-Alderase family.

It catalyses the reaction (2S)-3-[(2S)-3,5-dioxo-4-[(2E,4R,6R,8E,10E,12E)-4,6,12-trimethyltetradeca-2,8,10,12-tetraenoyl]pyrrolidin-2-yl]-2-hydroxy-2-methylpropanoate = sch 210972. The protein operates within secondary metabolite biosynthesis. In terms of biological role, diels-Alderase; part of the gene cluster that mediates the biosynthesis of the tetramic acid Sch210972, a potential anti-HIV fungal natural product that contains a decalin core. The PKS module of cghG together with the enoylreductase cghC catalyze the formation of the polyketide unit which is then conjugated to 4-hydroxyl-4-methyl glutamate (HMG) by the condensation domain of the cghG NRPS module. One unique structural feature of Sch210972 is the tetramic acid motif proposed to be derived from the non-proteinogenic amino acid HMG, by a Dieckmann-type condensation catalyzed by the reductase domain of cghG. The aldolase cghB catalyzes the aldol condensation of 2 molecules of pyruvic acid to yield the intermediate 4-hydroxyl-4-methyl-2-oxoglutarate (HMOG), which can then be stereoselectively transaminated by an unidentified enzyme to form HMG. The Diels-Alderase cghA then uses the Dieckmann product released by cghG as substrate and catalyzes the Diels-Alder cycloaddition to form the decalin ring of Sch210972. CghA also suppresses the nonenzymatic formation of the alternative stereoisomer. This chain is Diels-Alderase cghA, found in Chaetomium globosum (strain ATCC 6205 / CBS 148.51 / DSM 1962 / NBRC 6347 / NRRL 1970) (Soil fungus).